Here is a 501-residue protein sequence, read N- to C-terminus: Aspartate--tRNA ligase, cytoplasmic (501 aa).

Position 52 is a phosphothreonine (T52). K74 carries the N6-acetyllysine modification. E229 lines the L-aspartate pocket. S249 bears the Phosphoserine mark. Positions Q251–K254 are aspartate. R273 provides a ligand contact to L-aspartate. ATP contacts are provided by residues R273–E275 and R281–L283. Position 374 is an N6-acetyllysine (K374). The segment at K411–S415 is binding site for the 3'-end of tRNA. E424 contacts ATP. L-aspartate is bound by residues S427 and R431. G472–R475 provides a ligand contact to ATP. A Phosphothreonine; by PKA modification is found at T500.

The protein belongs to the class-II aminoacyl-tRNA synthetase family. Type 2 subfamily. In terms of assembly, homodimer. Part of a multisubunit complex that groups tRNA ligases for Arg (RARS1), Asp (DARS1), Gln (QARS1), Ile (IARS1), Leu (LARS1), Lys (KARS1), Met (MARS1) the bifunctional ligase for Glu and Pro (EPRS1) and the auxiliary subunits AIMP1/p43, AIMP2/p38 and EEF1E1/p18. In terms of tissue distribution, expression in the developing and adult brain shows similar patterns. Highly expressed in the ventricular and subventricular zones, including hippocampal subfields, the midlateral temporal cortex and the frontal polar cortex. The cerebellum, cerebral cortex, hippocampus, and lateral ventricle show preferential neuronal expression. Expression in the peripheral neurons is evident in the colon.

The protein localises to the cytoplasm. It is found in the cytosol. It carries out the reaction tRNA(Asp) + L-aspartate + ATP = L-aspartyl-tRNA(Asp) + AMP + diphosphate. Catalyzes the specific attachment of an amino acid to its cognate tRNA in a 2 step reaction: the amino acid (AA) is first activated by ATP to form AA-AMP and then transferred to the acceptor end of the tRNA. The protein is Aspartate--tRNA ligase, cytoplasmic of Homo sapiens (Human).